Consider the following 1068-residue polypeptide: Integrator complex subunit 3 homolog (1068 aa).

Disordered stretches follow at residues 916–939 (YPSS…STPS) and 1001–1068 (VGRR…NDSD). 4 positions are modified to phosphoserine: S1038, S1039, S1043, and S1044.

Belongs to the Integrator subunit 3 family. As to quaternary structure, belongs to the multiprotein complex Integrator, at least composed of IntS1, IntS2, IntS3, IntS4, omd/IntS5, IntS6, defl/IntS7, IntS8, IntS9, IntS10, IntS11, IntS12, asun/IntS13, IntS14 and IntS15. The core complex associates with protein phosphatase 2A subunits mts/PP2A and Pp2A-29B, to form the Integrator-PP2A (INTAC) complex.

The protein resides in the nucleus. The protein localises to the cytoplasm. In terms of biological role, component of the integrator complex, a multiprotein complex that terminates RNA polymerase II (Pol II) transcription in the promoter-proximal region of genes. The integrator complex provides a quality checkpoint during transcription elongation by driving premature transcription termination of transcripts that are unfavorably configured for transcriptional elongation: the complex terminates transcription by (1) catalyzing dephosphorylation of the C-terminal domain (CTD) of Pol II subunit Polr2A/Rbp1 and Spt5, and (2) degrading the exiting nascent RNA transcript via endonuclease activity. The integrator complex is also involved in the 3'-end processing of the U7 snRNA, and also the spliceosomal snRNAs U1, U2, U4 and U5. This Drosophila sechellia (Fruit fly) protein is Integrator complex subunit 3 homolog (IntS3).